Consider the following 446-residue polypeptide: tRNA modification GTPase MnmE (446 aa).

The (6S)-5-formyl-5,6,7,8-tetrahydrofolate site is built by arginine 28, glutamate 85, and lysine 124. Residues 220-372 (GLTVVLVGQP…LRAKLLQAAG (153 aa)) form the TrmE-type G domain. Asparagine 230 contributes to the K(+) binding site. GTP-binding positions include 230-235 (NVGKSS), 249-255 (TEIAGTT), and 274-277 (DTAG). Serine 234 contacts Mg(2+). K(+) contacts are provided by threonine 249, isoleucine 251, and threonine 254. Threonine 255 provides a ligand contact to Mg(2+). Residue lysine 446 participates in (6S)-5-formyl-5,6,7,8-tetrahydrofolate binding.

This sequence belongs to the TRAFAC class TrmE-Era-EngA-EngB-Septin-like GTPase superfamily. TrmE GTPase family. In terms of assembly, homodimer. Heterotetramer of two MnmE and two MnmG subunits. It depends on K(+) as a cofactor.

The protein resides in the cytoplasm. Exhibits a very high intrinsic GTPase hydrolysis rate. Involved in the addition of a carboxymethylaminomethyl (cmnm) group at the wobble position (U34) of certain tRNAs, forming tRNA-cmnm(5)s(2)U34. This Thiobacillus denitrificans (strain ATCC 25259 / T1) protein is tRNA modification GTPase MnmE.